The chain runs to 149 residues: Transcriptional repressor NrdR (149 aa).

A zinc finger lies at 3–34; sequence CPFCFAVDTKVIDSRLVGEGSSVRRRRQCLVC. The ATP-cone domain maps to 49-139; the sequence is PRVVKSNDVR…VYRSFEDIKE (91 aa).

It belongs to the NrdR family. The cofactor is Zn(2+).

Its function is as follows. Negatively regulates transcription of bacterial ribonucleotide reductase nrd genes and operons by binding to NrdR-boxes. The polypeptide is Transcriptional repressor NrdR (Escherichia fergusonii (strain ATCC 35469 / DSM 13698 / CCUG 18766 / IAM 14443 / JCM 21226 / LMG 7866 / NBRC 102419 / NCTC 12128 / CDC 0568-73)).